A 78-amino-acid polypeptide reads, in one-letter code: Sec-independent protein translocase protein TatA (78 aa).

Residues 1–21 (MGGISIWQLLIIAVIVVLLFG) form a helical membrane-spanning segment. The segment covering 47–59 (ESEKKDADFEPKS) has biased composition (basic and acidic residues). The disordered stretch occupies residues 47–78 (ESEKKDADFEPKSLEQQNKQAATESKKDKEQA). The span at 60–69 (LEQQNKQAAT) shows a compositional bias: polar residues.

It belongs to the TatA/E family. In terms of assembly, the Tat system comprises two distinct complexes: a TatABC complex, containing multiple copies of TatA, TatB and TatC subunits, and a separate TatA complex, containing only TatA subunits. Substrates initially bind to the TatABC complex, which probably triggers association of the separate TatA complex to form the active translocon.

The protein localises to the cell inner membrane. In terms of biological role, part of the twin-arginine translocation (Tat) system that transports large folded proteins containing a characteristic twin-arginine motif in their signal peptide across membranes. TatA could form the protein-conducting channel of the Tat system. This Vibrio vulnificus (strain YJ016) protein is Sec-independent protein translocase protein TatA.